The following is a 253-amino-acid chain: tRNA (guanine-N(1)-)-methyltransferase (253 aa).

S-adenosyl-L-methionine-binding positions include Gly-110 and 130–135 (IGDYIL).

This sequence belongs to the RNA methyltransferase TrmD family. As to quaternary structure, homodimer.

Its subcellular location is the cytoplasm. The catalysed reaction is guanosine(37) in tRNA + S-adenosyl-L-methionine = N(1)-methylguanosine(37) in tRNA + S-adenosyl-L-homocysteine + H(+). Functionally, specifically methylates guanosine-37 in various tRNAs. In Carboxydothermus hydrogenoformans (strain ATCC BAA-161 / DSM 6008 / Z-2901), this protein is tRNA (guanine-N(1)-)-methyltransferase.